We begin with the raw amino-acid sequence, 731 residues long: DNA gyrase subunit B, chloroplastic/mitochondrial (731 aa).

In terms of domain architecture, Toprim spans 512-619; sequence AEIFIVEGDS…RYQRALFEEG (108 aa). Residues Glu518, Asp592, and Asp594 each coordinate Mg(2+).

It belongs to the type II topoisomerase GyrB family. As to quaternary structure, made up of two chains. The A chain is responsible for DNA breakage and rejoining; the B chain catalyzes ATP hydrolysis. The cofactor is Mg(2+). Mn(2+) is required as a cofactor. Requires Ca(2+) as cofactor. Ubiquitous.

It localises to the plastid. The protein resides in the chloroplast. Its subcellular location is the mitochondrion. The enzyme catalyses ATP-dependent breakage, passage and rejoining of double-stranded DNA.. Its function is as follows. Seems to play a critical role in chloroplast nucleoid partitioning by regulating DNA topology. A type II topoisomerase that negatively supercoils closed circular double-stranded DNA in an ATP-dependent manner. The sequence is that of DNA gyrase subunit B, chloroplastic/mitochondrial (GYRB) from Nicotiana benthamiana.